Reading from the N-terminus, the 69-residue chain is Cold shock-like protein CspE (69 aa).

A CSD domain is found at 6-66; the sequence is GNVKWFNESK…GAKGPSAANV (61 aa).

The protein resides in the cytoplasm. The protein is Cold shock-like protein CspE (cspE) of Escherichia coli O6:H1 (strain CFT073 / ATCC 700928 / UPEC).